The sequence spans 486 residues: Ribosomal RNA small subunit methyltransferase F (486 aa).

Residues 124-130 (ASAPGSK), Glu-148, Asp-175, and Asp-193 each bind S-adenosyl-L-methionine. The Nucleophile role is filled by Cys-246.

Belongs to the class I-like SAM-binding methyltransferase superfamily. RsmB/NOP family.

It localises to the cytoplasm. It catalyses the reaction cytidine(1407) in 16S rRNA + S-adenosyl-L-methionine = 5-methylcytidine(1407) in 16S rRNA + S-adenosyl-L-homocysteine + H(+). Functionally, specifically methylates the cytosine at position 1407 (m5C1407) of 16S rRNA. This is Ribosomal RNA small subunit methyltransferase F from Shewanella baltica (strain OS195).